Consider the following 131-residue polypeptide: Small ribosomal subunit protein eS24 (131 aa).

M1 carries the post-translational modification N-acetylmethionine. Residue T9 is modified to Phosphothreonine. K37 is covalently cross-linked (Glycyl lysine isopeptide (Lys-Gly) (interchain with G-Cter in SUMO2)). Residues R90–K100 show a composition bias toward basic and acidic residues. The tract at residues R90–K131 is disordered. The span at K101–G119 shows a compositional bias: basic residues.

The protein belongs to the eukaryotic ribosomal protein eS24 family. Component of the small ribosomal subunit. Part of the small subunit (SSU) processome, composed of more than 70 proteins and the RNA chaperone small nucleolar RNA (snoRNA) U3.

The protein resides in the cytoplasm. The protein localises to the nucleus. Its subcellular location is the nucleolus. Functionally, component of the small ribosomal subunit. The ribosome is a large ribonucleoprotein complex responsible for the synthesis of proteins in the cell. Required for processing of pre-rRNA and maturation of 40S ribosomal subunits. Part of the small subunit (SSU) processome, first precursor of the small eukaryotic ribosomal subunit. During the assembly of the SSU processome in the nucleolus, many ribosome biogenesis factors, an RNA chaperone and ribosomal proteins associate with the nascent pre-rRNA and work in concert to generate RNA folding, modifications, rearrangements and cleavage as well as targeted degradation of pre-ribosomal RNA by the RNA exosome. The chain is Small ribosomal subunit protein eS24 (RPS24) from Pongo abelii (Sumatran orangutan).